Consider the following 949-residue polypeptide: RNA polymerase-associated protein RapA (949 aa).

The Helicase ATP-binding domain maps to 164–332; it reads EVADRIAPRV…FARLRLLDPN (169 aa). Position 177 to 184 (177 to 184) interacts with ATP; it reads DEVGLGKT. Positions 278-281 match the DEAH box motif; the sequence is DEAH. Positions 474 to 628 constitute a Helicase C-terminal domain; it reads RVEWLIDTLK…TCPTGNALQH (155 aa).

The protein belongs to the SNF2/RAD54 helicase family. RapA subfamily. As to quaternary structure, interacts with the RNAP. Has a higher affinity for the core RNAP than for the holoenzyme. Its ATPase activity is stimulated by binding to RNAP.

Transcription regulator that activates transcription by stimulating RNA polymerase (RNAP) recycling in case of stress conditions such as supercoiled DNA or high salt concentrations. Probably acts by releasing the RNAP, when it is trapped or immobilized on tightly supercoiled DNA. Does not activate transcription on linear DNA. Probably not involved in DNA repair. The polypeptide is RNA polymerase-associated protein RapA (Stutzerimonas stutzeri (strain A1501) (Pseudomonas stutzeri)).